Here is a 627-residue protein sequence, read N- to C-terminus: Chaperone protein DnaK (627 aa).

At T197 the chain carries Phosphothreonine; by autocatalysis. Low complexity predominate over residues 598 to 611 (AYAKEQGGQQGAAD). The tract at residues 598-627 (AYAKEQGGQQGAADAGKKADDDDVIDAEVE) is disordered. Residues 618-627 (DDDVIDAEVE) show a composition bias toward acidic residues.

The protein belongs to the heat shock protein 70 family.

Functionally, acts as a chaperone. The sequence is that of Chaperone protein DnaK from Sulfurovum sp. (strain NBC37-1).